The sequence spans 395 residues: MLQSWEFVLLISCFLCFSSDALQRISLKKMPSIRETLQEMGMKVADVLPSLKHRFSYLDEGLHNKTASTILTNFRDTQYYGEISIGTPAQIFKVVFDTGSSNLWVPSHQCSPLYSACVSHNRYDSSESSTYKPKGTKITLTYGQGYIEGFLSQDIVRVADIPITQFFTEAIALPSIPFMYAHFDGVLGMGYPKQAIGGVIPVFDNIMSEKVLSENVFSVYYSRHSESNTGGEIILGGSDPSHYTGDFHYVSTSREGYWHVDLKGVSIENKIALCHDGCTATIDTGTSFISGPASSISVLMETIGATLSRGDYVIDCNQINLLPDISFHLGDMTYSLSSSTYVLKYSDETECTVAFSAIDIPPPRGPLWLLGATFIKQYYIEFDRQNNRIGFATSF.

Residues 1–21 (MLQSWEFVLLISCFLCFSSDA) form the signal peptide. The propeptide at 22-43 (LQRISLKKMPSIRETLQEMGMK) is activation peptide. A glycan (N-linked (GlcNAc...) asparagine) is linked at Asn-64. The region spanning 79–392 (YYGEISIGTP…DRQNNRIGFA (314 aa)) is the Peptidase A1 domain. The active site involves Asp-97. Disulfide bonds link Cys-110–Cys-117 and Cys-274–Cys-278. Asp-283 is an active-site residue. A disulfide bond links Cys-316 and Cys-351.

This sequence belongs to the peptidase A1 family. N-glycosylated. Expressed by the venom gland (at protein level).

Its subcellular location is the secreted. It catalyses the reaction Cleavage of Leu-|-Xaa bond in angiotensinogen to generate angiotensin I.. Inhibited completely by aspartyl protease inhibitor pepstatin A, but not by the serine- or metalloproteinase inhibitors PMSF or EDTA. Its function is as follows. Renin is a highly specific endopeptidase, whose only known function is to generate angiotensin I from angiotensinogen in the plasma, initiating a cascade of reactions that produce an elevation of blood pressure and increased sodium retention by the kidney. This protein is also found in snake venom and shown to specifically cleave human and porcine angiotensinogen into angiotensin I. It does not have general protease activity, no cleavage of alpha or beta casein. May be directly responsible for elevation of blood pressure in the victims of envenomation. The chain is Renin from Echis ocellatus (Ocellated saw-scaled viper).